The following is a 133-amino-acid chain: MILVDSDVLIAHLRGVVAARDWLVSARKDGPLAISVVSTAELIGGMRTAERREVWRLLASFRVQPATEVIARRAGDMMRRYRRSHNRIGLGDYLIAATADVQDLQLATLNVWHFPMFEQLKPPFAVPGHRPRA.

The region spanning 2–119 is the PINc domain; sequence ILVDSDVLIA…NVWHFPMFEQ (118 aa). Residues aspartate 5 and aspartate 92 each coordinate Mg(2+).

The protein belongs to the PINc/VapC protein family. Mg(2+) serves as cofactor.

Its function is as follows. Toxic component of a type II toxin-antitoxin (TA) system. An RNase. The cognate antitoxin is VapB10. The polypeptide is Ribonuclease VapC10 (Mycobacterium tuberculosis (strain CDC 1551 / Oshkosh)).